We begin with the raw amino-acid sequence, 436 residues long: Cyclic nucleotide-binding domain-containing protein 1 (436 aa).

Basic and acidic residues predominate over residues 89 to 105; that stretch reads EQRELNEGKEESQHQQP. The interval 89-108 is disordered; it reads EQRELNEGKEESQHQQPDDS. Residue 322–436 participates in a nucleoside 3',5'-cyclic phosphate binding; that stretch reads YYEEWPTLSI…IIEDKDLFVA (115 aa).

The polypeptide is Cyclic nucleotide-binding domain-containing protein 1 (CNBD1) (Homo sapiens (Human)).